A 255-amino-acid polypeptide reads, in one-letter code: Indole-3-glycerol phosphate synthase (255 aa).

Belongs to the TrpC family.

The enzyme catalyses 1-(2-carboxyphenylamino)-1-deoxy-D-ribulose 5-phosphate + H(+) = (1S,2R)-1-C-(indol-3-yl)glycerol 3-phosphate + CO2 + H2O. It participates in amino-acid biosynthesis; L-tryptophan biosynthesis; L-tryptophan from chorismate: step 4/5. The chain is Indole-3-glycerol phosphate synthase from Streptococcus pneumoniae (strain Taiwan19F-14).